The following is a 355-amino-acid chain: Guanine nucleotide-binding protein G(i) subunit alpha-2 (355 aa).

A lipid anchor (N-myristoyl glycine) is attached at Gly2. A lipid anchor (S-palmitoyl cysteine) is attached at Cys3. Residues Arg32–Phe355 form the G-alpha domain. Residues Lys35–Thr48 are G1 motif. Residues Gly40 to Ser47, Leu176 to Thr182, Asp201 to Gln205, Asn270 to Asp273, and Ala327 contribute to the GTP site. 2 residues coordinate Mg(2+): Ser47 and Thr182. Residues Asp174 to Thr182 are G2 motif. Positions Phe197–Arg206 are G3 motif. Residues Ile266 to Asp273 are G4 motif. The segment at Thr325–Thr330 is G5 motif.

It belongs to the G-alpha family. G(i/o/t/z) subfamily. In terms of assembly, g proteins are composed of 3 units; alpha, beta and gamma. The alpha chain contains the guanine nucleotide binding site. In this context, interacts with GNB2. Interacts with UNC5B. Interacts with GPSM1. Interacts with RGS12 and RGS14. Interacts (inactive GDP-bound form) with NUCB1 (via GBA motif); the interaction leads to activation of GNAI3. Interacts (inactive GDP-bound form) with CCDC88C/DAPLE (via GBA motif). Interacts (inactive GDP-bound form) with CCDC8A/GIV (via GBA motif). Ubiquitously expressed. Most abundant in the lung and in the spleen.

It is found in the cytoplasm. The protein resides in the cytoskeleton. The protein localises to the microtubule organizing center. Its subcellular location is the centrosome. It localises to the cell membrane. It is found in the membrane. Functionally, guanine nucleotide-binding proteins (G proteins) are involved as modulators or transducers in various transmembrane signaling systems. The G(i) proteins are involved in hormonal regulation of adenylate cyclase: they inhibit the cyclase in response to beta-adrenergic stimuli. May play a role in cell division. This chain is Guanine nucleotide-binding protein G(i) subunit alpha-2 (GNAI2), found in Cavia porcellus (Guinea pig).